The chain runs to 562 residues: IRK-interacting protein (562 aa).

Disordered regions lie at residues 29-61 (ASLM…RPLP) and 303-322 (VVSQ…SEMP). The segment covering 36–61 (SSPSSNYSLRNPSSSSAASPASRPLP) has biased composition (low complexity). The stretch at 246–306 (SGVEKLKREL…LREATEVVSQ (61 aa)) forms a coiled coil.

As to quaternary structure, interacts with IRK. In terms of tissue distribution, highly expressed in root tips, shoot apices and developing flowers.

In Arabidopsis thaliana (Mouse-ear cress), this protein is IRK-interacting protein.